A 353-amino-acid chain; its full sequence is Terpene synthase 3 (353 aa).

Asp118, Asn261, and Glu269 together coordinate Mg(2+). The D(D/E)XX(D/E) motif signature appears at 118-122 (DDLLE). The NSE motif signature appears at 261-269 (NDTFLLKKE). A WxxxxxRY motif motif is present at residues 342–349 (WCSKTTRY).

Belongs to the terpene synthase family. Mg(2+) serves as cofactor.

In terms of biological role, terpene synthase that may be involved in the production of volatile terpenoids. Does not show detectable terpene products with either farnesyl diphosphate (FPP) or geranyl diphosphate (GPP). P.polycephalum has a unique biology and these volatile terpenoids could function in internal communication of P.polycephalum, to mark the territory that have been explored, or they may be involved in chemotaxis. The protein is Terpene synthase 3 of Physarum polycephalum (Slime mold).